The following is a 145-amino-acid chain: RNAP inhibitory protein (145 aa).

The tract at residues 110 to 123 (HIKKLNLNSLAMLS) is C-terminal tail, binds in the RNAP DNA-binding channel.

It belongs to the viral ORF131/RIP family. Interacts with host RNA polymerase (RNAP) subunits Rpo1N and Rpo2.

The protein resides in the virion. Plays a role in the inhibition of global transcription by interacting with the RNA polymerase (RNAP) clamp, locking it in a fixed position and inhibiting the formation and/or stability of the pre-initiation complex (PIC). Also overlaps with the transcription factor B binding site; overall RIP probably interferes with DNA loading onto RNAP but does not displace DNA once it is loaded. May play a role in virus particle assembly, possibly by dissociating active RNAP from the virus genome. This is RNAP inhibitory protein from Acidianus two-tailed virus (ATV).